Consider the following 344-residue polypeptide: uncharacterized protein (344 aa).

An N-terminal signal peptide occupies residues Met-1–Ser-19. The propeptide at Ser-323–Leu-344 is removed in mature form.

Its subcellular location is the cell membrane. This is an uncharacterized protein from Dictyostelium discoideum (Social amoeba).